Here is a 223-residue protein sequence, read N- to C-terminus: Killer cell lectin-like receptor subfamily B member 1B allele A (223 aa).

The Cytoplasmic segment spans residues 1 to 45; that stretch reads MDTAVVYADLHLARTGEPKREPPPSLSPDTCQCPRWHRLALKLGC. The short motif at 5 to 10 is the ITIM motif element; the sequence is VVYADL. An LCK-binding motif motif is present at residues 31 to 34; it reads CQCP. The helical; Signal-anchor for type II membrane protein transmembrane segment at 46-66 threads the bilayer; the sequence is ACLILLVLSVIGLGVLVLTLL. At 67–223 the chain is on the extracellular side; sequence QKPLIQNSPA…LKRESTCNDS (157 aa). The C-type lectin domain maps to 101-211; it reads HQDKCFHVSQ…CDSDNIWICQ (111 aa). 2 disulfide bridges follow: Cys122–Cys210 and Cys189–Cys202.

As to quaternary structure, homodimer; disulfide-linked. Interacts with tyrosine kinase LCK. Binds PTPN6/SHP-1 in a phosphorylation-dependent manner. In terms of tissue distribution, expressed in a subset of natural killer cells.

Its subcellular location is the membrane. Its function is as follows. Receptor for CLEC2D/OCIL. Ligand-binding contributes to inhibition of cytotoxic natural killer (NK) cells. May mediate MHC class I-independent 'missing-self' recognition of allografts, tumor cells and virus-infected cells. This Rattus norvegicus (Rat) protein is Killer cell lectin-like receptor subfamily B member 1B allele A.